The following is a 185-amino-acid chain: Orotate phosphoribosyltransferase (185 aa).

5-phospho-alpha-D-ribose 1-diphosphate-binding positions include arginine 94, lysine 95, lysine 98, histidine 100, and 120-128; that span reads EDVTTTGGS. Positions 124 and 152 each coordinate orotate.

The protein belongs to the purine/pyrimidine phosphoribosyltransferase family. PyrE subfamily. As to quaternary structure, homodimer. Mg(2+) is required as a cofactor.

The enzyme catalyses orotidine 5'-phosphate + diphosphate = orotate + 5-phospho-alpha-D-ribose 1-diphosphate. Its pathway is pyrimidine metabolism; UMP biosynthesis via de novo pathway; UMP from orotate: step 1/2. Catalyzes the transfer of a ribosyl phosphate group from 5-phosphoribose 1-diphosphate to orotate, leading to the formation of orotidine monophosphate (OMP). The polypeptide is Orotate phosphoribosyltransferase (Thermococcus kodakarensis (strain ATCC BAA-918 / JCM 12380 / KOD1) (Pyrococcus kodakaraensis (strain KOD1))).